The chain runs to 468 residues: Asparagine--tRNA ligase (468 aa).

Belongs to the class-II aminoacyl-tRNA synthetase family. In terms of assembly, homodimer.

The protein localises to the cytoplasm. The catalysed reaction is tRNA(Asn) + L-asparagine + ATP = L-asparaginyl-tRNA(Asn) + AMP + diphosphate + H(+). The protein is Asparagine--tRNA ligase of Parabacteroides distasonis (strain ATCC 8503 / DSM 20701 / CIP 104284 / JCM 5825 / NCTC 11152).